We begin with the raw amino-acid sequence, 356 residues long: Trifolitoxin operon protein TfxC (356 aa).

The protein is Trifolitoxin operon protein TfxC (tfxC) of Rhizobium leguminosarum bv. trifolii.